The following is a 146-amino-acid chain: Small ribosomal subunit protein bS16 (146 aa).

A disordered region spans residues 119-146 (GSENKGGKSKKAEEKSAEKTAEKSEGEA). The segment covering 128–146 (KKAEEKSAEKTAEKSEGEA) has biased composition (basic and acidic residues).

It belongs to the bacterial ribosomal protein bS16 family.

The sequence is that of Small ribosomal subunit protein bS16 from Thermobifida fusca (strain YX).